Reading from the N-terminus, the 478-residue chain is JmjC domain-containing histone demethylation protein 1 (478 aa).

The segment at 5–68 (SESCPLCKVH…IYHCPECVPK (64 aa)) adopts a PHD-type zinc-finger fold. The 167-residue stretch at 217–383 (SDVAKLGVDF…MQLKINEIER (167 aa)) folds into the JmjC domain. Substrate is bound at residue T266. Residues H269 and D271 each coordinate Fe cation. K286 is a binding site for substrate. H351 contributes to the Fe cation binding site.

Belongs to the JHDM1 histone demethylase family. Fe(2+) is required as a cofactor.

The protein localises to the nucleus. The enzyme catalyses N(6),N(6)-dimethyl-L-lysyl(36)-[histone H3] + 2 2-oxoglutarate + 2 O2 = L-lysyl(36)-[histone H3] + 2 formaldehyde + 2 succinate + 2 CO2. Its function is as follows. Histone demethylase that specifically demethylates 'Lys-36' of histone H3, thereby playing a central role in histone code. The polypeptide is JmjC domain-containing histone demethylation protein 1 (JHD1) (Candida albicans (strain SC5314 / ATCC MYA-2876) (Yeast)).